Here is a 360-residue protein sequence, read N- to C-terminus: Peptide chain release factor 1 (360 aa).

Residue Gln-235 is modified to N5-methylglutamine. The tract at residues Ala-284–Phe-312 is disordered.

The protein belongs to the prokaryotic/mitochondrial release factor family. In terms of processing, methylated by PrmC. Methylation increases the termination efficiency of RF1.

It is found in the cytoplasm. Its function is as follows. Peptide chain release factor 1 directs the termination of translation in response to the peptide chain termination codons UAG and UAA. The chain is Peptide chain release factor 1 from Escherichia coli O81 (strain ED1a).